The following is an 806-amino-acid chain: NADH:(hydroxy)cinnamate reductase subunit CrdB (806 aa).

Position 257 is an FMN phosphoryl serine (Ser-257). Positions 310, 329, 337, 338, 342, 343, and 576 each coordinate FAD. Arg-635 functions as the Proton donor in the catalytic mechanism. FAD is bound by residues His-742, Glu-771, Ala-786, and Leu-787.

Belongs to the FAD-dependent oxidoreductase 2 family. FRD/SDH subfamily. As to quaternary structure, NADH:(hydroxy)cinnamate reductase Crd is a heterodimer composed of CrdA and CrdB subunits, encoded by adjacent genes. FAD is required as a cofactor. Requires FMN as cofactor. In terms of processing, is flavinylated on Ser-257 by ApbE, encoded in a neighboring gene. Covalent attachment of FMN is essential for catalytic activity.

It catalyses the reaction 3-phenylpropanoate + NAD(+) = (E)-cinnamate + NADH + H(+). The catalysed reaction is 3-(3,4-dihydroxyphenyl)propanoate + NAD(+) = (E)-caffeate + NADH + H(+). It carries out the reaction phloretate + NAD(+) = (E)-4-coumarate + NADH + H(+). The enzyme catalyses dihydroferulate + NAD(+) = (E)-ferulate + NADH + H(+). Its activity is regulated as follows. Is inactivated by molecular oxygen, allowing regulation of Crd activity by medium oxygen level. Its function is as follows. Component of the NADH:(hydroxy)cinnamate reductase Crd that catalyzes the reduction of the double bond in cinnamate, p-coumarate, caffeate, and ferulate under anaerobic conditions with NADH or methyl viologen as the electron donor. Is moderately active against acrylate and practically inactive against urocanate, fumarate, methacrylate and crotonate. CrdB is the catalytic subunit that binds substrates. Is likely involved in protecting V.ruber from (hydroxy)cinnamate poisoning. In Vibrio ruber (strain DSM 16370 / JCM 11486 / BCRC 17186 / CECT 7878 / LMG 23124 / VR1), this protein is NADH:(hydroxy)cinnamate reductase subunit CrdB.